A 485-amino-acid polypeptide reads, in one-letter code: Outer membrane protein OprM (485 aa).

The N-terminal stretch at 1–17 (MKRSFLSLAVAAVVLSG) is a signal peptide. The N-palmitoyl cysteine moiety is linked to residue C18. C18 carries the S-diacylglycerol cysteine lipid modification.

This sequence belongs to the outer membrane factor (OMF) (TC 1.B.17) family. Component of the MexAB-OprM multidrug efflux complex, composed of six MexA subunits forming a hexameric tube, binding to a MexB trimer, which interact with the trimeric OprM outer membrane channel protein. The OprM homotrimer forms a 135 Angstroms-long pore. It consists of a beta-barrel, which is probably inserted in the outer membrane, and an alpha-barrel formed by alpha-helices which probably spans the periplasm. In the ground state the periplasmic end is closed, while the outer membrane end opening is 6-8 Angstroms in diameter. OprM does not directly contact MexB; instead, MexA joins MexB and OprM by forming a funnel-like hexamer anchored to the inner membrane. MexA may initially form a hexameric ring complex with MexB prior to OprM, then OprM undergoes a conformational change as it contacts MexA, allowing the periplasmic gate to open. It is thought that, under high intracellular substrate concentration, MexB ejects substrate into the tunnel formed by MexA-OprM; as the substrate level declines, conformational changes in MexB cause efflux to reduce and stop and the complex shifts to the closed state. MexB subunit acts as a substrate:proton antiporter and activity is enhanced significantly when in complex with MexA and OprM, in vitro.

The protein localises to the cell outer membrane. Its activity is regulated as follows. Export of antibiotics and solvents is dramatically decreased in the presence of the protonophore carbonyl cyanide m-chlorophenylhydrazone (CCCP), therefore may be driven by a proton gradient. Antibiotic efflux is inhibited by pyridopyrimidine derivatives, such as ABI-PP, acting by binding to a hydrophobic pocket in MexB. In terms of biological role, the outer membrane component of the MexAB-OprM efflux system that confers multidrug resistance. Functions as the major efflux pump for n-hexane and p-xylene efflux. Has been shown in one study to be involved in the active efflux of the autoinducer N-(3-oxododecanoyl) homoserine lactone, thereby playing an indirect role in quorum-sensing; but has been shown in another study not to be involved in efflux of this autoinducer. Over-expression of the pump increases antibiotic and solvent efflux capacities. Can replace the OprJ outer membrane component of the MexCD-OprJ pump; the antibiotics exported are those exported by the intact MexCD pump, showing that efflux substrate specificity is not conferred by this component. Serves as the outer membrane component for the MexXY efflux system. Implicated in the secretion of the siderophore pyoverdine. OprM is probably involved in the efflux of the siderophore across the outer membrane. The protein is Outer membrane protein OprM (oprM) of Pseudomonas aeruginosa (strain ATCC 15692 / DSM 22644 / CIP 104116 / JCM 14847 / LMG 12228 / 1C / PRS 101 / PAO1).